A 313-amino-acid polypeptide reads, in one-letter code: tRNA-cytidine(32) 2-sulfurtransferase (313 aa).

The PP-loop motif motif lies at S54–S59. The [4Fe-4S] cluster site is built by C129, C132, and C220.

This sequence belongs to the TtcA family. Homodimer. The cofactor is Mg(2+). [4Fe-4S] cluster is required as a cofactor.

It is found in the cytoplasm. It carries out the reaction cytidine(32) in tRNA + S-sulfanyl-L-cysteinyl-[cysteine desulfurase] + AH2 + ATP = 2-thiocytidine(32) in tRNA + L-cysteinyl-[cysteine desulfurase] + A + AMP + diphosphate + H(+). It participates in tRNA modification. Functionally, catalyzes the ATP-dependent 2-thiolation of cytidine in position 32 of tRNA, to form 2-thiocytidine (s(2)C32). The sulfur atoms are provided by the cysteine/cysteine desulfurase (IscS) system. The polypeptide is tRNA-cytidine(32) 2-sulfurtransferase (Methylibium petroleiphilum (strain ATCC BAA-1232 / LMG 22953 / PM1)).